Consider the following 688-residue polypeptide: Glycine--tRNA ligase beta subunit (688 aa).

The protein belongs to the class-II aminoacyl-tRNA synthetase family. Tetramer of two alpha and two beta subunits.

The protein localises to the cytoplasm. The enzyme catalyses tRNA(Gly) + glycine + ATP = glycyl-tRNA(Gly) + AMP + diphosphate. This chain is Glycine--tRNA ligase beta subunit, found in Aliivibrio fischeri (strain ATCC 700601 / ES114) (Vibrio fischeri).